A 294-amino-acid chain; its full sequence is 2-methoxy-6-polyprenyl-1,4-benzoquinol methylase, mitochondrial (294 aa).

Residues Met1–Leu10 constitute a mitochondrion transit peptide. Residues Thr100, Asp136, and Asp166–Ala167 each bind S-adenosyl-L-methionine.

It belongs to the class I-like SAM-binding methyltransferase superfamily. MenG/UbiE family. As to quaternary structure, component of a multi-subunit COQ enzyme complex.

The protein resides in the mitochondrion inner membrane. It catalyses the reaction a 2-methoxy-6-(all-trans-polyprenyl)benzene-1,4-diol + S-adenosyl-L-methionine = a 5-methoxy-2-methyl-3-(all-trans-polyprenyl)benzene-1,4-diol + S-adenosyl-L-homocysteine + H(+). It functions in the pathway cofactor biosynthesis; ubiquinone biosynthesis. Its function is as follows. Methyltransferase required for the conversion of 2-polyprenyl-6-methoxy-1,4-benzoquinol (DDMQH2) to 2-polyprenyl-3-methyl-6-methoxy-1,4-benzoquinol (DMQH2). This chain is 2-methoxy-6-polyprenyl-1,4-benzoquinol methylase, mitochondrial, found in Oryza sativa subsp. japonica (Rice).